The sequence spans 24 residues: SGPAQKQNVVNQLLVLIYLYKXDS.

It belongs to the tyrosinase family. Hemocyanin subfamily. In terms of tissue distribution, hemolymph.

The protein resides in the secreted. The protein localises to the extracellular space. Hemocyanins are copper-containing oxygen carriers occurring freely dissolved in the hemolymph of many mollusks and arthropods. This Maja squinado (Mediterranean spider crab) protein is Hemocyanin subunit 4e.